The primary structure comprises 369 residues: Homoserine O-succinyltransferase (369 aa).

The tract at residues 90 to 93 is important for substrate specificity; that stretch reads GISA. In terms of domain architecture, AB hydrolase-1 spans 107-353; it reads WWSGAVGVRA…YGHDAFLKED (247 aa). Ser175 (nucleophile) is an active-site residue. A substrate-binding site is contributed by Arg236. Catalysis depends on residues Asp316 and His346. Asp347 lines the substrate pocket.

The protein belongs to the AB hydrolase superfamily. MetX family. As to quaternary structure, homodimer.

The protein resides in the cytoplasm. The catalysed reaction is L-homoserine + succinyl-CoA = O-succinyl-L-homoserine + CoA. It functions in the pathway amino-acid biosynthesis; L-methionine biosynthesis via de novo pathway; O-succinyl-L-homoserine from L-homoserine: step 1/1. Its function is as follows. Transfers a succinyl group from succinyl-CoA to L-homoserine, forming succinyl-L-homoserine. This is Homoserine O-succinyltransferase from Brevundimonas diminuta (strain ATCC 11568 / DSM 7234 / NBRC 12697 / NCIMB 9393 / NCTC 8545).